The following is a 523-amino-acid chain: Coatomer subunit delta-2 (523 aa).

The disordered stretch occupies residues 218–243; that stretch reads DSFASKPKGRPSAAATAPGKGLGMKL. One can recognise an MHD domain in the interval 282-523; that stretch reads SDPVTVTIEE…RLVTANYQVV (242 aa).

This sequence belongs to the adaptor complexes medium subunit family. Delta-COP subfamily. In terms of assembly, oligomeric complex that consists of at least the alpha, beta, beta', gamma, delta, epsilon and zeta subunits.

The protein resides in the cytoplasm. Its subcellular location is the golgi apparatus membrane. It localises to the cytoplasmic vesicle. The protein localises to the COPI-coated vesicle membrane. The coatomer is a cytosolic protein complex that binds to dilysine motifs and reversibly associates with Golgi non-clathrin-coated vesicles, which further mediate biosynthetic protein transport from the ER, via the Golgi up to the trans Golgi network. Coatomer complex is required for budding from Golgi membranes, and is essential for the retrograde Golgi-to-ER transport of dilysine-tagged proteins. This is Coatomer subunit delta-2 from Oryza sativa subsp. japonica (Rice).